The following is a 66-amino-acid chain: Large ribosomal subunit protein bL32 (66 aa).

It belongs to the bacterial ribosomal protein bL32 family.

This Rickettsia canadensis (strain McKiel) protein is Large ribosomal subunit protein bL32.